Here is a 386-residue protein sequence, read N- to C-terminus: Rhomboid domain-containing protein 3 (386 aa).

A run of 5 helical transmembrane segments spans residues 20-40, 58-78, 92-112, 141-161, and 163-183; these read VLMLLMSTLWLVGAGPGLVLA, LGHTALPGLLLSLLLLPTVGW, ASALLALASGLLAVLLAGLGL, GALPPWLSPWLLLALTPLLSS, and PPFLQLLCGLLAGLAYAAGAF. The 39-residue stretch at 324–362 folds into the UBA domain; that stretch reads VSSLRLQQLERMGFPTEQAVVALAATGRVEGAVSLLVGG.

The protein localises to the membrane. The polypeptide is Rhomboid domain-containing protein 3 (RHBDD3) (Homo sapiens (Human)).